Consider the following 320-residue polypeptide: uncharacterized protein (320 aa).

A coiled-coil region spans residues 1-26; the sequence is MNHYDQYQKYKKKYLDLKNQLNNSSQ.

It localises to the virion. This is an uncharacterized protein from Acanthamoeba polyphaga mimivirus (APMV).